A 94-amino-acid polypeptide reads, in one-letter code: Small ribosomal subunit protein uS19 (94 aa).

This sequence belongs to the universal ribosomal protein uS19 family.

Protein S19 forms a complex with S13 that binds strongly to the 16S ribosomal RNA. This chain is Small ribosomal subunit protein uS19, found in Elusimicrobium minutum (strain Pei191).